The primary structure comprises 468 residues: ATP synthase subunit beta (468 aa).

Residue 155–162 participates in ATP binding; sequence GGAGVGKT.

Belongs to the ATPase alpha/beta chains family. F-type ATPases have 2 components, CF(1) - the catalytic core - and CF(0) - the membrane proton channel. CF(1) has five subunits: alpha(3), beta(3), gamma(1), delta(1), epsilon(1). CF(0) has three main subunits: a(1), b(2) and c(9-12). The alpha and beta chains form an alternating ring which encloses part of the gamma chain. CF(1) is attached to CF(0) by a central stalk formed by the gamma and epsilon chains, while a peripheral stalk is formed by the delta and b chains.

It is found in the cell membrane. It carries out the reaction ATP + H2O + 4 H(+)(in) = ADP + phosphate + 5 H(+)(out). Produces ATP from ADP in the presence of a proton gradient across the membrane. The catalytic sites are hosted primarily by the beta subunits. The polypeptide is ATP synthase subunit beta (Streptococcus pneumoniae serotype 19F (strain G54)).